Here is a 359-residue protein sequence, read N- to C-terminus: 3-dehydroquinate synthase (359 aa).

NAD(+)-binding positions include 69–74 (SGESSK), 103–107 (GVVGD), 127–128 (TT), Lys139, Lys148, and 166–169 (TLST). The Zn(2+) site is built by Glu181, His242, and His259.

It belongs to the sugar phosphate cyclases superfamily. Dehydroquinate synthase family. NAD(+) is required as a cofactor. Requires Co(2+) as cofactor. The cofactor is Zn(2+).

The protein localises to the cytoplasm. The catalysed reaction is 7-phospho-2-dehydro-3-deoxy-D-arabino-heptonate = 3-dehydroquinate + phosphate. Its pathway is metabolic intermediate biosynthesis; chorismate biosynthesis; chorismate from D-erythrose 4-phosphate and phosphoenolpyruvate: step 2/7. Functionally, catalyzes the conversion of 3-deoxy-D-arabino-heptulosonate 7-phosphate (DAHP) to dehydroquinate (DHQ). The chain is 3-dehydroquinate synthase from Oceanobacillus iheyensis (strain DSM 14371 / CIP 107618 / JCM 11309 / KCTC 3954 / HTE831).